Consider the following 152-residue polypeptide: Deoxyuridine 5'-triphosphate nucleotidohydrolase (152 aa).

Substrate-binding positions include Arg-71 to Gly-73, Asn-84, Leu-88 to Asp-90, and Met-98.

It belongs to the dUTPase family. Requires Mg(2+) as cofactor.

It carries out the reaction dUTP + H2O = dUMP + diphosphate + H(+). It participates in pyrimidine metabolism; dUMP biosynthesis; dUMP from dCTP (dUTP route): step 2/2. Functionally, this enzyme is involved in nucleotide metabolism: it produces dUMP, the immediate precursor of thymidine nucleotides and it decreases the intracellular concentration of dUTP so that uracil cannot be incorporated into DNA. This Haemophilus ducreyi (strain 35000HP / ATCC 700724) protein is Deoxyuridine 5'-triphosphate nucleotidohydrolase.